Here is a 103-residue protein sequence, read N- to C-terminus: ATP synthase F(0) complex subunit g, mitochondrial (103 aa).

Ala-2 carries the post-translational modification N-acetylalanine. N6-acetyllysine occurs at positions 11, 24, and 54.

This sequence belongs to the ATPase g subunit family. Component of the ATP synthase complex composed at least of ATP5F1A/subunit alpha, ATP5F1B/subunit beta, ATP5MC1/subunit c (homooctomer), MT-ATP6/subunit a, MT-ATP8/subunit 8, ATP5ME/subunit e, ATP5MF/subunit f, ATP5MG/subunit g, ATP5MK/subunit k, ATP5MJ/subunit j, ATP5F1C/subunit gamma, ATP5F1D/subunit delta, ATP5F1E/subunit epsilon, ATP5PF/subunit F6, ATP5PB/subunit b, ATP5PD/subunit d, ATP5PO/subunit OSCP. ATP synthase complex consists of a soluble F(1) head domain (subunits alpha(3) and beta(3)) - the catalytic core - and a membrane F(0) domain - the membrane proton channel (subunits c, a, 8, e, f, g, k and j). These two domains are linked by a central stalk (subunits gamma, delta, and epsilon) rotating inside the F1 region and a stationary peripheral stalk (subunits F6, b, d, and OSCP).

It localises to the mitochondrion. The protein resides in the mitochondrion inner membrane. In terms of biological role, subunit g, of the mitochondrial membrane ATP synthase complex (F(1)F(0) ATP synthase or Complex V) that produces ATP from ADP in the presence of a proton gradient across the membrane which is generated by electron transport complexes of the respiratory chain. ATP synthase complex consist of a soluble F(1) head domain - the catalytic core - and a membrane F(1) domain - the membrane proton channel. These two domains are linked by a central stalk rotating inside the F(1) region and a stationary peripheral stalk. During catalysis, ATP synthesis in the catalytic domain of F(1) is coupled via a rotary mechanism of the central stalk subunits to proton translocation. In vivo, can only synthesize ATP although its ATP hydrolase activity can be activated artificially in vitro. Part of the complex F(0) domain. This chain is ATP synthase F(0) complex subunit g, mitochondrial, found in Rattus norvegicus (Rat).